A 185-amino-acid chain; its full sequence is MIDEIFDDANDRMTKSVENLESNFAKIRTGRAHPSILDAVKVDYYGSEVPVSQVANVNVEDARTLTVQPWEQSMVSVVEKAIMTSDIGVNPVTTGNVMRIPMPPLTEERRKEFIKLAKSEAEQTKVAIRNIRRDANADFKNLNKDKEITDDELRQAEEQIQKATDEHVSQVDQMLAKKEESLMEI.

Belongs to the RRF family.

It is found in the cytoplasm. In terms of biological role, responsible for the release of ribosomes from messenger RNA at the termination of protein biosynthesis. May increase the efficiency of translation by recycling ribosomes from one round of translation to another. This Hydrogenovibrio crunogenus (strain DSM 25203 / XCL-2) (Thiomicrospira crunogena) protein is Ribosome-recycling factor.